A 141-amino-acid chain; its full sequence is 3-hydroxyacyl-[acyl-carrier-protein] dehydratase FabZ (141 aa).

His-49 is a catalytic residue.

This sequence belongs to the thioester dehydratase family. FabZ subfamily.

Its subcellular location is the cytoplasm. It carries out the reaction a (3R)-hydroxyacyl-[ACP] = a (2E)-enoyl-[ACP] + H2O. Functionally, involved in unsaturated fatty acids biosynthesis. Catalyzes the dehydration of short chain beta-hydroxyacyl-ACPs and long chain saturated and unsaturated beta-hydroxyacyl-ACPs. This is 3-hydroxyacyl-[acyl-carrier-protein] dehydratase FabZ from Fusobacterium nucleatum subsp. nucleatum (strain ATCC 25586 / DSM 15643 / BCRC 10681 / CIP 101130 / JCM 8532 / KCTC 2640 / LMG 13131 / VPI 4355).